The sequence spans 246 residues: Pyridoxine 5'-phosphate synthase (246 aa).

Asn6 contacts 3-amino-2-oxopropyl phosphate. A 1-deoxy-D-xylulose 5-phosphate-binding site is contributed by 8–9; sequence DH. Arg17 provides a ligand contact to 3-amino-2-oxopropyl phosphate. His49 functions as the Proton acceptor in the catalytic mechanism. The 1-deoxy-D-xylulose 5-phosphate site is built by Arg51 and His56. Residue Glu76 is the Proton acceptor of the active site. Residue Thr106 participates in 1-deoxy-D-xylulose 5-phosphate binding. His196 serves as the catalytic Proton donor. Residues Gly197 and 219–220 each bind 3-amino-2-oxopropyl phosphate; that span reads GH.

It belongs to the PNP synthase family. Homooctamer; tetramer of dimers.

It is found in the cytoplasm. The enzyme catalyses 3-amino-2-oxopropyl phosphate + 1-deoxy-D-xylulose 5-phosphate = pyridoxine 5'-phosphate + phosphate + 2 H2O + H(+). It functions in the pathway cofactor biosynthesis; pyridoxine 5'-phosphate biosynthesis; pyridoxine 5'-phosphate from D-erythrose 4-phosphate: step 5/5. Functionally, catalyzes the complicated ring closure reaction between the two acyclic compounds 1-deoxy-D-xylulose-5-phosphate (DXP) and 3-amino-2-oxopropyl phosphate (1-amino-acetone-3-phosphate or AAP) to form pyridoxine 5'-phosphate (PNP) and inorganic phosphate. This Akkermansia muciniphila (strain ATCC BAA-835 / DSM 22959 / JCM 33894 / BCRC 81048 / CCUG 64013 / CIP 107961 / Muc) protein is Pyridoxine 5'-phosphate synthase.